The following is a 530-amino-acid chain: NADH-quinone oxidoreductase subunit C/D (530 aa).

The tract at residues 1–144 (MEEIKYIEPA…NPLRMDNEET (144 aa)) is NADH dehydrogenase I subunit C. An NADH dehydrogenase I subunit D region spans residues 171–530 (EYVVNIGPQH…LDYVVPDIDR (360 aa)).

It in the N-terminal section; belongs to the complex I 30 kDa subunit family. In the C-terminal section; belongs to the complex I 49 kDa subunit family. In terms of assembly, NDH-1 is composed of 13 different subunits. Subunits NuoB, CD, E, F, and G constitute the peripheral sector of the complex.

Its subcellular location is the cell inner membrane. The catalysed reaction is a quinone + NADH + 5 H(+)(in) = a quinol + NAD(+) + 4 H(+)(out). Its function is as follows. NDH-1 shuttles electrons from NADH, via FMN and iron-sulfur (Fe-S) centers, to quinones in the respiratory chain. The immediate electron acceptor for the enzyme in this species is believed to be a menaquinone. Couples the redox reaction to proton translocation (for every two electrons transferred, four hydrogen ions are translocated across the cytoplasmic membrane), and thus conserves the redox energy in a proton gradient. This chain is NADH-quinone oxidoreductase subunit C/D, found in Bacteroides fragilis (strain ATCC 25285 / DSM 2151 / CCUG 4856 / JCM 11019 / LMG 10263 / NCTC 9343 / Onslow / VPI 2553 / EN-2).